We begin with the raw amino-acid sequence, 92 residues long: Small ribosomal subunit protein uS19 (92 aa).

This sequence belongs to the universal ribosomal protein uS19 family. Part of the 30S ribosomal subunit.

In terms of biological role, protein S19 forms a complex with S13 that binds strongly to the 16S ribosomal RNA. The polypeptide is Small ribosomal subunit protein uS19 (rpsS) (Bacillus subtilis (strain 168)).